A 384-amino-acid polypeptide reads, in one-letter code: Zinc transporter 7 (384 aa).

The N-terminal stretch at 1-25 (MERFVQFLRRGNGLMAASLAAGSCA) is a signal peptide. The Extracellular portion of the chain corresponds to 26–46 (EEVAKAEGAGCRDDAAALRLK). Residues 47-67 (GVAMATILVAGVVGVGLPLAG) form a helical membrane-spanning segment. The Cytoplasmic portion of the chain corresponds to 68–79 (RKRRALRTDSAA). The chain crosses the membrane as a helical span at residues 80–100 (FVAAKAFAAGVILATGFVHML). Topologically, residues 101–119 (HDAEHALSSPCLPAHPWRS) are extracellular. Residues 120-140 (FPFPGFVAMSAALATLVLDFL) traverse the membrane as a helical segment. Residues 141–227 (ATRFYEGKHR…GEGEVPAQVR (87 aa)) are Cytoplasmic-facing. Residues 185–222 (DNKAPLLQPHSHSHSHPHGHGHGHELAQPEGSGGEGEV) form a disordered region. Basic residues predominate over residues 195–205 (SHSHSHPHGHG). The helical transmembrane segment at 228–248 (SVVVSQILEMGIVSHSVIIGL) threads the bilayer. The Extracellular portion of the chain corresponds to 249 to 261 (SLGVSRSPCTIRP). The helical transmembrane segment at 262 to 282 (LVAALSFHQFFEGFALGGCIA) threads the bilayer. At 283-291 (QAQFKTLSA) the chain is on the cytoplasmic side. A helical transmembrane segment spans residues 292 to 312 (AIMACFFAITTPAGIAAGAGV). Topologically, residues 313 to 323 (ASFYNANSPRA) are extracellular. A helical transmembrane segment spans residues 324–344 (LVVEGILDSVSAGILIYMSLV). At 345 to 363 (DLIAADFLGGKMTGSTRQQ) the chain is on the cytoplasmic side. Residues 364 to 384 (VMAYIALFLGALSMSSLAIWA) traverse the membrane as a helical segment.

Belongs to the ZIP transporter (TC 2.A.5) family.

The protein localises to the cell membrane. In terms of biological role, zinc transporter that may be involved in zinc uptake from the rhizosphere. This Oryza sativa subsp. japonica (Rice) protein is Zinc transporter 7 (ZIP7).